The chain runs to 838 residues: Transforming acidic coiled-coil-containing protein 3 (838 aa).

N-acetylserine is present on serine 2. Residues serine 25, serine 39, and serine 71 each carry the phosphoserine modification. A disordered region spans residues 123 to 227 (EADTDLLGDA…HGAEEECKAE (105 aa)). Over residues 132–164 (ASPAFGSGSSSESGPGALADLDCSSSSQSPGSS) the composition is skewed to low complexity. Serine 175 and serine 177 each carry phosphoserine. The span at 204-227 (DPCRTESQHKAETPHGAEEECKAE) shows a compositional bias: basic and acidic residues. 3 positions are modified to phosphoserine: serine 250, serine 317, and serine 402. The interval 311 to 527 (GRAMTLSPQE…LELKEESFRD (217 aa)) is disordered. Positions 403–412 (YHLDWDKMDD) are enriched in basic and acidic residues. Serine 434 carries the post-translational modification Phosphoserine. The span at 492-503 (NSASTSLPTSCP) shows a compositional bias: polar residues. Residues 522–577 (EESFRDPAEVLGTGAEVDYLEQFGTSSFKESALRKQSLYLKFDPLLRDSPGRPVPV) form a necessary but not sufficient for spindle localization region. The residue at position 558 (serine 558) is a Phosphoserine; by AURKA. A disordered region spans residues 569-594 (DSPGRPVPVATETSSMHGANETPSGR). The span at 579 to 591 (TETSSMHGANETP) shows a compositional bias: polar residues. A necessary but not sufficient for spindle localization region spans residues 594 to 838 (RPREAKLVEF…DDLISKMEKI (245 aa)). The stretch at 637 to 837 (LQYSQKDLDA…CDDLISKMEK (201 aa)) forms a coiled coil.

It belongs to the TACC family. As to quaternary structure, interacts with microtubules. Interacts with CKAP5 independently of clathrin. Interacts with CKAP5 and clathrin forming the TACC3/ch-TOG/clathrin complex located at spindle inter-microtubules bridges; TACC3 (phosphorylated at Ser-558 by AURKA) and CLTC are proposed to form a composite microtubule interaction surface. Interacts with CCDC100/CEP120. The coiled coil C-terminal region interacts with AH receptor nuclear translocator protein (ARNT) and ARNT2. Interacts with GCN5L2 and PCAF.

Its subcellular location is the cytoplasm. The protein localises to the cytoskeleton. It is found in the microtubule organizing center. The protein resides in the centrosome. It localises to the spindle. Its subcellular location is the spindle pole. Plays a role in the microtubule-dependent coupling of the nucleus and the centrosome. Involved in the processes that regulate centrosome-mediated interkinetic nuclear migration (INM) of neural progenitors. Acts as a component of the TACC3/ch-TOG/clathrin complex proposed to contribute to stabilization of kinetochore fibers of the mitotic spindle by acting as inter-microtubule bridge. The TACC3/ch-TOG/clathrin complex is required for the maintenance of kinetochore fiber tension. May be involved in the control of cell growth and differentiation. May contribute to cancer. The chain is Transforming acidic coiled-coil-containing protein 3 (TACC3) from Homo sapiens (Human).